The sequence spans 455 residues: Probable ATP-dependent RNA helicase DDX47 (455 aa).

The tract at residues 1-21 (MAADEEPDSPSGALQTAAEEE) is disordered. Ala-2 is subject to N-acetylalanine. The residue at position 9 (Ser-9) is a Phosphoserine. The Q motif motif lies at 24-52 (KTFKDLGVTDVLCEACDQLGWAKPTKIQI). One can recognise a Helicase ATP-binding domain in the interval 55 to 226 (IPLALQGRDI…RAALKNPVKC (172 aa)). Residue 68–75 (AETGSGKT) participates in ATP binding. The residue at position 149 (Thr-149) is a Phosphothreonine. Positions 174-177 (DEAD) match the DEAD box motif. The 161-residue stretch at 237–397 (KLQQYYLFIP…VFPTQDEEVM (161 aa)) folds into the Helicase C-terminal domain. Residues 412–455 (MELREHGEKKKRKREDAGDDDDKEGAIGVRNKVAGGKMKKRKGR) form a disordered region.

Belongs to the DEAD box helicase family. DDX47/RRP3 subfamily. In terms of assembly, interacts with AGO1 and AGO2. Interacts with GABARAP. Interacts with NOL8; the interaction is RNA-dependent.

The protein localises to the nucleus. It is found in the nucleolus. It carries out the reaction ATP + H2O = ADP + phosphate + H(+). Functionally, involved in apoptosis. May have a role in rRNA processing and mRNA splicing. Associates with pre-rRNA precursors. The polypeptide is Probable ATP-dependent RNA helicase DDX47 (Ddx47) (Mus musculus (Mouse)).